A 215-amino-acid polypeptide reads, in one-letter code: UPF0502 protein YceH (215 aa).

The residue at position 80 (Lys80) is an N6-acetyllysine.

Belongs to the UPF0502 family.

The chain is UPF0502 protein YceH from Escherichia coli O157:H7.